The primary structure comprises 202 residues: Large ribosomal subunit protein bL25 (202 aa).

A disordered region spans residues 1–21 (MSKESYELKAEARERVGKGSS).

This sequence belongs to the bacterial ribosomal protein bL25 family. CTC subfamily. In terms of assembly, part of the 50S ribosomal subunit; part of the 5S rRNA/L5/L18/L25 subcomplex. Contacts the 5S rRNA. Binds to the 5S rRNA independently of L5 and L18.

Its function is as follows. This is one of the proteins that binds to the 5S RNA in the ribosome where it forms part of the central protuberance. The polypeptide is Large ribosomal subunit protein bL25 (Agrobacterium fabrum (strain C58 / ATCC 33970) (Agrobacterium tumefaciens (strain C58))).